Here is a 148-residue protein sequence, read N- to C-terminus: Deoxyuridine 5'-triphosphate nucleotidohydrolase (148 aa).

Substrate-binding positions include 67–69, Asn80, 84–86, and Met94; these read RSG and LID.

The protein belongs to the dUTPase family. Mg(2+) is required as a cofactor.

It catalyses the reaction dUTP + H2O = dUMP + diphosphate + H(+). The protein operates within pyrimidine metabolism; dUMP biosynthesis; dUMP from dCTP (dUTP route): step 2/2. Its function is as follows. This enzyme is involved in nucleotide metabolism: it produces dUMP, the immediate precursor of thymidine nucleotides and it decreases the intracellular concentration of dUTP so that uracil cannot be incorporated into DNA. The chain is Deoxyuridine 5'-triphosphate nucleotidohydrolase from Burkholderia ambifaria (strain MC40-6).